The chain runs to 137 residues: Large ribosomal subunit protein uL16 (137 aa).

This sequence belongs to the universal ribosomal protein uL16 family. Part of the 50S ribosomal subunit.

Functionally, binds 23S rRNA and is also seen to make contacts with the A and possibly P site tRNAs. In Bartonella bacilliformis (strain ATCC 35685 / KC583 / Herrer 020/F12,63), this protein is Large ribosomal subunit protein uL16.